The primary structure comprises 546 residues: MFS-type transporter patC (546 aa).

Residues 1 to 15 are compositionally biased toward polar residues; the sequence is MSIDASPSESVLESQ. Residues 1 to 29 form a disordered region; it reads MSIDASPSESVLESQTPDRVDESIPIKAE. Over residues 16–29 the composition is skewed to basic and acidic residues; that stretch reads TPDRVDESIPIKAE. The next 14 helical transmembrane spans lie at 41–61, 89–109, 113–133, 143–163, 171–191, 203–223, 245–265, 277–297, 318–338, 350–370, 379–399, 416–436, 447–467, and 515–535; these read IVGF…LLYG, VGFT…YAIF, WLFL…GAAP, VWAG…ITIL, VYVG…PIIG, WSFY…VFLL, WVGT…IVFG, IALY…QYFC, LLLY…VYYI, GIMS…TILL, GYFI…AVLM, ILMG…PAIV, FMNI…SAIF, and VIVS…ALYV.

This sequence belongs to the major facilitator superfamily. TCR/Tet family.

It localises to the vacuole membrane. It is found in the cell membrane. Functionally, MFS-type transporter; part of the gene cluster that mediates the biosynthesis of patulin, an acetate-derived tetraketide mycotoxin produced by several fungal species that shows antimicrobial properties against several bacteria. May be involved in the secretion of E-ascladiol to be converted to patulin by the secreted patulin synthase patE. This chain is MFS-type transporter patC, found in Penicillium expansum (Blue mold rot fungus).